The chain runs to 146 residues: Transcriptional regulator MraZ (146 aa).

SpoVT-AbrB domains lie at 4 to 46 (SYEK…SKKS) and 75 to 118 (TIEV…SKEK).

The protein belongs to the MraZ family. As to quaternary structure, forms oligomers.

It is found in the cytoplasm. Its subcellular location is the nucleoid. The protein is Transcriptional regulator MraZ of Mycoplasma mobile (strain ATCC 43663 / 163K / NCTC 11711) (Mesomycoplasma mobile).